A 287-amino-acid chain; its full sequence is Glutamate racemase (287 aa).

Residues 1–15 (MATKPQDANTTSREA) are compositionally biased toward polar residues. A disordered region spans residues 1 to 25 (MATKPQDANTTSREAITSKADSPPR). Substrate contacts are provided by residues 32 to 33 (DS) and 64 to 65 (YG). The active-site Proton donor/acceptor is the Cys-96. Position 97–98 (97–98 (NT)) interacts with substrate. Cys-208 (proton donor/acceptor) is an active-site residue. Residue 209-210 (TH) participates in substrate binding.

This sequence belongs to the aspartate/glutamate racemases family.

The catalysed reaction is L-glutamate = D-glutamate. It participates in cell wall biogenesis; peptidoglycan biosynthesis. Its function is as follows. Provides the (R)-glutamate required for cell wall biosynthesis. This is Glutamate racemase from Yersinia pseudotuberculosis serotype O:3 (strain YPIII).